The primary structure comprises 122 residues: MIQPQTHLNVADNSGARELMCIRIIGASNHRYAHIGDVIVAVIKEAVPNMPLERSEVIRAVIVRTCKELRRDNGMIIRYDDNAAVVIDQEGNPKGTRVFGAIARELRQLNFTKIVSLAPEVL.

Belongs to the universal ribosomal protein uL14 family. In terms of assembly, part of the 50S ribosomal subunit.

The protein resides in the plastid. The protein localises to the chloroplast. Binds to 23S rRNA. In Liriodendron tulipifera (Tuliptree), this protein is Large ribosomal subunit protein uL14c.